The sequence spans 116 residues: Protein Rev (116 aa).

The residue at position 5 (Ser5) is a Phosphoserine; by host CK2. A homomultimerization region spans residues 18-26 (YIKILYQSN). Residues 34–50 (TRKARRNRRRRWRARQR) carry the Nuclear localization signal and RNA-binding (RRE) motif. The Nuclear export signal and binding to XPO1 signature appears at 73–84 (LQLPLLEKLHIN). A disordered region spans residues 90–116 (GQGTEKGVGSPQISVESRAVLGSGTKE). Ser99 carries the post-translational modification Phosphoserine; by host.

It belongs to the HIV-1 REV protein family. Homomultimer; when bound to the RRE. Multimeric assembly is essential for activity and may involve XPO1. Binds to human KPNB1, XPO1, TNPO1, RANBP5 and IPO7. Interacts with the viral Integrase. Interacts with human KHDRBS1. Interacts with human NAP1; this interaction decreases Rev multimerization and stimulates its activity. Interacts with human DEAD-box helicases DDX3 and DDX24; these interactions may serve for viral RNA export to the cytoplasm and packaging, respectively. Interacts with human PSIP1; this interaction may inhibit HIV-1 DNA integration by promoting dissociation of the Integrase-LEDGF/p75 complex. Asymmetrically arginine dimethylated at one site by host PRMT6. Methylation impairs the RNA-binding activity and export of viral RNA from the nucleus to the cytoplasm. Post-translationally, phosphorylated by protein kinase CK2. Presence of, and maybe binding to the N-terminus of the regulatory beta subunit of CK2 is necessary for CK2-mediated Rev's phosphorylation.

It is found in the host nucleus. The protein localises to the host nucleolus. It localises to the host cytoplasm. Its function is as follows. Escorts unspliced or incompletely spliced viral pre-mRNAs (late transcripts) out of the nucleus of infected cells. These pre-mRNAs carry a recognition sequence called Rev responsive element (RRE) located in the env gene, that is not present in fully spliced viral mRNAs (early transcripts). This function is essential since most viral proteins are translated from unspliced or partially spliced pre-mRNAs which cannot exit the nucleus by the pathway used by fully processed cellular mRNAs. Rev itself is translated from a fully spliced mRNA that readily exits the nucleus. Rev's nuclear localization signal (NLS) binds directly to KPNB1/Importin beta-1 without previous binding to KPNA1/Importin alpha-1. KPNB1 binds to the GDP bound form of RAN (Ran-GDP) and targets Rev to the nucleus. In the nucleus, the conversion from Ran-GDP to Ran-GTP dissociates Rev from KPNB1 and allows Rev's binding to the RRE in viral pre-mRNAs. Rev multimerization on the RRE via cooperative assembly exposes its nuclear export signal (NES) to the surface. Rev can then form a complex with XPO1/CRM1 and Ran-GTP, leading to nuclear export of the complex. Conversion from Ran-GTP to Ran-GDP mediates dissociation of the Rev/RRE/XPO1/RAN complex, so that Rev can return to the nucleus for a subsequent round of export. Beside KPNB1, also seems to interact with TNPO1/Transportin-1, RANBP5/IPO5 and IPO7/RANBP7 for nuclear import. The nucleoporin-like HRB/RIP is an essential cofactor that probably indirectly interacts with Rev to release HIV RNAs from the perinuclear region to the cytoplasm. The sequence is that of Protein Rev from Human immunodeficiency virus type 1 group M subtype F2 (isolate MP257) (HIV-1).